Reading from the N-terminus, the 287-residue chain is Ethanolamine ammonia-lyase small subunit (287 aa).

Positions 168, 189, and 218 each coordinate adenosylcob(III)alamin.

Belongs to the EutC family. The basic unit is a heterodimer which dimerizes to form tetramers. The heterotetramers trimerize; 6 large subunits form a core ring with 6 small subunits projecting outwards. Requires adenosylcob(III)alamin as cofactor.

It is found in the bacterial microcompartment. The enzyme catalyses ethanolamine = acetaldehyde + NH4(+). It participates in amine and polyamine degradation; ethanolamine degradation. Functionally, catalyzes the deamination of various vicinal amino-alcohols to oxo compounds. Allows this organism to utilize ethanolamine as the sole source of nitrogen and carbon in the presence of external vitamin B12. In Pseudomonas syringae pv. tomato (strain ATCC BAA-871 / DC3000), this protein is Ethanolamine ammonia-lyase small subunit.